A 416-amino-acid polypeptide reads, in one-letter code: Phosphoglycerate kinase (416 aa).

(2R)-3-phosphoglycerate is bound by residues valine 23, aspartate 24, phenylalanine 25, asparagine 26, glutamine 39, arginine 40, serine 63, histidine 64, glycine 66, arginine 67, leucine 122, arginine 123, histidine 170, and arginine 171. Glycine 214 is a binding site for ADP. Glycine 214 is a binding site for CDP. Alanine 215 and lysine 216 together coordinate AMP. Alanine 215 is a binding site for ATP. Alanine 215 is a binding site for Mg(2+). A CDP-binding site is contributed by aspartate 219. Aspartate 219 is a binding site for Mg(2+). Lysine 220 is an AMP binding site. Lysine 220 contacts ATP. Residue glycine 238 coordinates ADP. Glycine 238 contacts CDP. 2 residues coordinate AMP: glycine 239 and glycine 312. Residues glycine 239 and glycine 312 each contribute to the ATP site. CDP-binding residues include glycine 337, alanine 339, and phenylalanine 342. ADP is bound at residue phenylalanine 342. Residue glutamate 343 participates in AMP binding. Residues glutamate 343, aspartate 374, and threonine 375 each coordinate ATP. Aspartate 374 is a Mg(2+) binding site.

It belongs to the phosphoglycerate kinase family. As to quaternary structure, monomer. It depends on Mg(2+) as a cofactor.

It is found in the cytoplasm. The protein resides in the mitochondrion. The catalysed reaction is (2R)-3-phosphoglycerate + ATP = (2R)-3-phospho-glyceroyl phosphate + ADP. The protein operates within carbohydrate degradation; glycolysis; pyruvate from D-glyceraldehyde 3-phosphate: step 2/5. Its function is as follows. Catalyzes one of the two ATP producing reactions in the glycolytic pathway via the reversible conversion of 1,3-diphosphoglycerate to 3-phosphoglycerate. Both L- and D- forms of purine and pyrimidine nucleotides can be used as substrates, but the activity is much lower on pyrimidines. Negatively regulates the biosynthesis of acetyl-CoA from pyruvate in the mitochondrion. This Hypocrea jecorina (Trichoderma reesei) protein is Phosphoglycerate kinase (pgk1).